The primary structure comprises 248 residues: 2,3-bisphosphoglycerate-dependent phosphoglycerate mutase (248 aa).

Residues 7–14 (RHGESIWN), 20–21 (TG), R59, 86–89 (ERHY), K97, 113–114 (RR), and 182–183 (GN) each bind substrate. H8 serves as the catalytic Tele-phosphohistidine intermediate. E86 serves as the catalytic Proton donor/acceptor.

It belongs to the phosphoglycerate mutase family. BPG-dependent PGAM subfamily.

The enzyme catalyses (2R)-2-phosphoglycerate = (2R)-3-phosphoglycerate. It functions in the pathway carbohydrate degradation; glycolysis; pyruvate from D-glyceraldehyde 3-phosphate: step 3/5. Its function is as follows. Catalyzes the interconversion of 2-phosphoglycerate and 3-phosphoglycerate. This chain is 2,3-bisphosphoglycerate-dependent phosphoglycerate mutase, found in Methylacidiphilum infernorum (isolate V4) (Methylokorus infernorum (strain V4)).